Here is a 286-residue protein sequence, read N- to C-terminus: Ribosomal RNA small subunit methyltransferase A (286 aa).

Asn-28, Leu-30, Gly-55, Glu-77, Asp-103, and Asn-123 together coordinate S-adenosyl-L-methionine.

This sequence belongs to the class I-like SAM-binding methyltransferase superfamily. rRNA adenine N(6)-methyltransferase family. RsmA subfamily.

The protein localises to the cytoplasm. It catalyses the reaction adenosine(1518)/adenosine(1519) in 16S rRNA + 4 S-adenosyl-L-methionine = N(6)-dimethyladenosine(1518)/N(6)-dimethyladenosine(1519) in 16S rRNA + 4 S-adenosyl-L-homocysteine + 4 H(+). Specifically dimethylates two adjacent adenosines (A1518 and A1519) in the loop of a conserved hairpin near the 3'-end of 16S rRNA in the 30S particle. May play a critical role in biogenesis of 30S subunits. The polypeptide is Ribosomal RNA small subunit methyltransferase A (Rhodopseudomonas palustris (strain BisB18)).